Consider the following 130-residue polypeptide: Small ribosomal subunit protein uS8 (130 aa).

It belongs to the universal ribosomal protein uS8 family. Part of the 30S ribosomal subunit.

One of the primary rRNA binding proteins, it binds directly to 16S rRNA central domain where it helps coordinate assembly of the platform of the 30S subunit. The chain is Small ribosomal subunit protein uS8 from Pyrobaculum calidifontis (strain DSM 21063 / JCM 11548 / VA1).